Here is a 238-residue protein sequence, read N- to C-terminus: Transcriptional activator protein AnoR (238 aa).

Positions glutamate 170–glycine 236 constitute an HTH luxR-type domain. A DNA-binding region (H-T-H motif) is located at residues serine 195–cysteine 214.

Belongs to the autoinducer-regulated transcriptional regulatory protein family.

In terms of biological role, positively regulates the expression of anoI. Required for biofilm formation and motility. Probably part of a quorum-sensing system with AnoI. This is Transcriptional activator protein AnoR from Acinetobacter nosocomialis.